The primary structure comprises 80 residues: Defensin-like protein 51 (80 aa).

An N-terminal signal peptide occupies residues 1-27 (MGFTKILVTFFLVGLLVISSSPQNAIA). Intrachain disulfides connect Cys-39–Cys-79, Cys-43–Cys-66, Cys-52–Cys-77, and Cys-56–Cys-78.

Belongs to the DEFL family.

Its subcellular location is the secreted. The sequence is that of Defensin-like protein 51 (LCR48) from Arabidopsis thaliana (Mouse-ear cress).